We begin with the raw amino-acid sequence, 273 residues long: Gamma-glutamyl cyclotransferase aclK (273 aa).

It belongs to the class-I pyridoxal-phosphate-dependent aminotransferase family.

The enzyme catalyses an alpha-(gamma-L-glutamyl)-L-amino acid = 5-oxo-L-proline + an L-alpha-amino acid. It participates in mycotoxin biosynthesis. In terms of biological role, gamma-glutamyl cyclotransferase; part of the gene cluster that mediates the biosynthesis of aspirochlorine (or antibiotic A30641), an unusual halogenated spiro compound with distinctive antifungal properties due to selective inhibition of protein biosynthesis, and which is also active against bacteria, viruses, and murine tumor cells. The non-ribosomal peptide synthetase (NRPS) aclP is responsible the formation of the diketopiperazine (DKP) core from the condensation of 2 phenylalanine residues. One Phe residue is tailored into chlorotyrosine by hydroxylation and chlorination, whereas the second Phe undergoes an unprecedented C-C bond cleavage to be converted into glycine. After formation of the DKP, sulfur is incorporated into the DKP by conjugation with glutathione by aclG, followed by its stepwise degradation to the thiol by aclI, aclJ and aclK, and the dithiol oxidation by aclT. In addition, oxygenases (aclB, aclC, aclL and aclO) and O-methyltransferases (aclM and aclU) act as tailoring enzymes to produce the intermediate dechloroaspirochlorine. Ultimately, chlorination of dechloroaspirochlorine by the halogenase aclH is the last step in the aspirochlorine pathway. In Aspergillus oryzae (strain ATCC 42149 / RIB 40) (Yellow koji mold), this protein is Gamma-glutamyl cyclotransferase aclK.